The primary structure comprises 227 residues: 2-C-methyl-D-erythritol 4-phosphate cytidylyltransferase (227 aa).

It belongs to the IspD/TarI cytidylyltransferase family. IspD subfamily.

It catalyses the reaction 2-C-methyl-D-erythritol 4-phosphate + CTP + H(+) = 4-CDP-2-C-methyl-D-erythritol + diphosphate. It functions in the pathway isoprenoid biosynthesis; isopentenyl diphosphate biosynthesis via DXP pathway; isopentenyl diphosphate from 1-deoxy-D-xylulose 5-phosphate: step 2/6. Functionally, catalyzes the formation of 4-diphosphocytidyl-2-C-methyl-D-erythritol from CTP and 2-C-methyl-D-erythritol 4-phosphate (MEP). The sequence is that of 2-C-methyl-D-erythritol 4-phosphate cytidylyltransferase from Dehalococcoides mccartyi (strain CBDB1).